The following is a 199-amino-acid chain: 7-methyl-GTP pyrophosphatase (199 aa).

Asp-76 serves as the catalytic Proton acceptor.

This sequence belongs to the Maf family. YceF subfamily. Requires a divalent metal cation as cofactor.

Its subcellular location is the cytoplasm. The catalysed reaction is N(7)-methyl-GTP + H2O = N(7)-methyl-GMP + diphosphate + H(+). Its function is as follows. Nucleoside triphosphate pyrophosphatase that hydrolyzes 7-methyl-GTP (m(7)GTP). May have a dual role in cell division arrest and in preventing the incorporation of modified nucleotides into cellular nucleic acids. The protein is 7-methyl-GTP pyrophosphatase of Brucella abortus biovar 1 (strain 9-941).